Reading from the N-terminus, the 95-residue chain is Small ribosomal subunit protein bS6 (95 aa).

This sequence belongs to the bacterial ribosomal protein bS6 family.

Binds together with bS18 to 16S ribosomal RNA. This is Small ribosomal subunit protein bS6 from Geobacillus kaustophilus (strain HTA426).